An 884-amino-acid polypeptide reads, in one-letter code: Bifunctional heparan sulfate N-deacetylase/N-sulfotransferase 2 (884 aa).

Residues 1–18 (MLKLWKVVRPARQLELHR) lie on the Cytoplasmic side of the membrane. The chain crosses the membrane as a helical; Signal-anchor for type II membrane protein span at residues 19–39 (LILLLIAFSLGSMGFLAYYVS). Topologically, residues 40–884 (TSPKAKEPLP…REELQHSSSG (845 aa)) are lumenal. The tract at residues 41–598 (SPKAKEPLPL…KRHKDIWSKE (558 aa)) is heparan sulfate N-deacetylase 2. The disordered stretch occupies residues 49 to 82 (PLPLGDCSSSGAAGGPGPVRPPVPPRPPRPPETA). A compositionally biased stretch (pro residues) spans 66–79 (PVRPPVPPRPPRPP). N351 and N401 each carry an N-linked (GlcNAc...) asparagine glycan. Residues 599–884 (KTCDRLPKFL…REELQHSSSG (286 aa)) form a heparan sulfate N-sulfotransferase 2 region. The active-site For sulfotransferase activity is the K614. 614 to 618 (KTGTT) is a binding site for 3'-phosphoadenylyl sulfate. A glycan (N-linked (GlcNAc...) asparagine) is linked at N667. S712 contacts 3'-phosphoadenylyl sulfate. N-linked (GlcNAc...) asparagine glycosylation is found at N727 and N803. A disulfide bridge connects residues C818 and C828. 833 to 837 (KGRKY) is a binding site for 3'-phosphoadenylyl sulfate.

Belongs to the sulfotransferase 1 family. NDST subfamily. Monomer.

It localises to the golgi apparatus membrane. The enzyme catalyses alpha-D-glucosaminyl-[heparan sulfate](n) + 3'-phosphoadenylyl sulfate = N-sulfo-alpha-D-glucosaminyl-[heparan sulfate](n) + adenosine 3',5'-bisphosphate + 2 H(+). The protein operates within glycan metabolism; heparan sulfate biosynthesis. Its pathway is glycan metabolism; heparin biosynthesis. Its function is as follows. Essential bifunctional enzyme that catalyzes both the N-deacetylation and the N-sulfation of glucosamine (GlcNAc) of the glycosaminoglycan in heparan sulfate. Modifies the GlcNAc-GlcA disaccharide repeating sugar backbone to make N-sulfated heparosan, a prerequisite substrate for later modifications in heparin biosynthesis. Plays a role in determining the extent and pattern of sulfation of heparan sulfate. Required for the exosomal release of SDCBP, CD63 and syndecan. This Bos taurus (Bovine) protein is Bifunctional heparan sulfate N-deacetylase/N-sulfotransferase 2 (NDST2).